The following is a 103-amino-acid chain: Putative ribosomal RNA-processing protein 7 homolog B (103 aa).

Residues M1–E19 are compositionally biased toward basic and acidic residues. The segment at M1–E25 is disordered. Positions E71–F100 form a coiled coil.

Belongs to the RRP7 family.

This Homo sapiens (Human) protein is Putative ribosomal RNA-processing protein 7 homolog B.